Here is a 65-residue protein sequence, read N- to C-terminus: MPKLKTHRGLAKRIKISGSGKYLRKKAGKSHLLSGKSRKRKRNLKKTVIVDSTNVKAVKKLLPYL.

The protein belongs to the bacterial ribosomal protein bL35 family.

The protein is Large ribosomal subunit protein bL35 of Caldicellulosiruptor saccharolyticus (strain ATCC 43494 / DSM 8903 / Tp8T 6331).